The sequence spans 308 residues: Ribosomal RNA large subunit methyltransferase F (308 aa).

The protein belongs to the methyltransferase superfamily. METTL16/RlmF family.

Its subcellular location is the cytoplasm. It carries out the reaction adenosine(1618) in 23S rRNA + S-adenosyl-L-methionine = N(6)-methyladenosine(1618) in 23S rRNA + S-adenosyl-L-homocysteine + H(+). Specifically methylates the adenine in position 1618 of 23S rRNA. This Escherichia coli O17:K52:H18 (strain UMN026 / ExPEC) protein is Ribosomal RNA large subunit methyltransferase F.